Consider the following 414-residue polypeptide: Probable elongation factor 1-gamma 1 (414 aa).

Residues 1–82 (MALVLHTYKG…YVSRLNGDNS (82 aa)) enclose the GST N-terminal domain. The region spanning 87–215 (SLIEYAQIEQ…VKQTEAVPPI (129 aa)) is the GST C-terminal domain. Low complexity predominate over residues 214–224 (PIASKKAAQPA). Positions 214–260 (PIASKKAAQPAKPKEEPKKKEAPVAEAPKLAEEEEAPKPKAKNPLDL) are disordered. Residues 225–236 (KPKEEPKKKEAP) are compositionally biased toward basic and acidic residues. The EF-1-gamma C-terminal domain occupies 254-414 (AKNPLDLLPP…EALLDAKCFK (161 aa)).

As to quaternary structure, EF-1 is composed of four subunits: alpha, beta, delta, and gamma.

Its function is as follows. Probably plays a role in anchoring the complex to other cellular components. The polypeptide is Probable elongation factor 1-gamma 1 (Arabidopsis thaliana (Mouse-ear cress)).